Reading from the N-terminus, the 226-residue chain is Leucyl/phenylalanyl-tRNA--protein transferase (226 aa).

The protein belongs to the L/F-transferase family.

The protein localises to the cytoplasm. The enzyme catalyses N-terminal L-lysyl-[protein] + L-leucyl-tRNA(Leu) = N-terminal L-leucyl-L-lysyl-[protein] + tRNA(Leu) + H(+). It catalyses the reaction N-terminal L-arginyl-[protein] + L-leucyl-tRNA(Leu) = N-terminal L-leucyl-L-arginyl-[protein] + tRNA(Leu) + H(+). It carries out the reaction L-phenylalanyl-tRNA(Phe) + an N-terminal L-alpha-aminoacyl-[protein] = an N-terminal L-phenylalanyl-L-alpha-aminoacyl-[protein] + tRNA(Phe). In terms of biological role, functions in the N-end rule pathway of protein degradation where it conjugates Leu, Phe and, less efficiently, Met from aminoacyl-tRNAs to the N-termini of proteins containing an N-terminal arginine or lysine. This is Leucyl/phenylalanyl-tRNA--protein transferase from Pseudomonas aeruginosa (strain LESB58).